We begin with the raw amino-acid sequence, 511 residues long: GMP synthase [glutamine-hydrolyzing] (511 aa).

The Glutamine amidotransferase type-1 domain maps to 5–195 (PIVVLDFGSQ…AKHICGCEST (191 aa)). The Nucleophile role is filled by C82. Active-site residues include H169 and E171. Residues 196-386 (WNMGSFAKEQ…LGLPKSMISR (191 aa)) enclose the GMPS ATP-PPase domain. Residue 223–229 (SGGVDSS) coordinates ATP.

As to quaternary structure, homodimer.

It catalyses the reaction XMP + L-glutamine + ATP + H2O = GMP + L-glutamate + AMP + diphosphate + 2 H(+). It participates in purine metabolism; GMP biosynthesis; GMP from XMP (L-Gln route): step 1/1. Its function is as follows. Catalyzes the synthesis of GMP from XMP. The polypeptide is GMP synthase [glutamine-hydrolyzing] (Aliarcobacter butzleri (strain RM4018) (Arcobacter butzleri)).